The sequence spans 128 residues: Deoxycytidylate deaminase (128 aa).

The 124-residue stretch at 5-128 folds into the CMP/dCMP-type deaminase domain; it reads DWDEYFLGIA…IERVVYPKES (124 aa). His-81 contributes to the Zn(2+) binding site. The active-site Proton donor is the Glu-83. Cys-107 and Cys-110 together coordinate Zn(2+).

This sequence belongs to the cytidine and deoxycytidylate deaminase family.

The enzyme catalyses dCMP + H2O + H(+) = dUMP + NH4(+). This is Deoxycytidylate deaminase (36.1) from Mycobacterium (Mycobacteriophage D29).